A 178-amino-acid polypeptide reads, in one-letter code: NADPH azoreductase (178 aa).

Position 106-111 (106-111 (GGGKGG)) interacts with NADP(+).

It belongs to the azoreductase type 2 family. As to quaternary structure, monomer.

It catalyses the reaction N,N-dimethyl-1,4-phenylenediamine + aniline + 2 NADP(+) = 4-(dimethylamino)azobenzene + 2 NADPH + 2 H(+). Its function is as follows. Catalyzes the reductive cleavage of azo bond in aromatic azo compounds to the corresponding amines. Requires NADPH as an electron donor for its activity. Compounds with paired naphthalene groups coupled with the azo group are good substrates, with the following preference order: Rocceline &gt; Sumifix Black B &gt; Solar Orange. The chain is NADPH azoreductase (azr) from Bacillus sp. (strain OY1-2).